We begin with the raw amino-acid sequence, 216 residues long: MOB kinase activator 3B (216 aa).

The Zn(2+) site is built by Cys82, Cys87, His164, and His169.

Its function is as follows. Modulates LATS1 expression in the Hippo signaling pathway which plays a pivotal role in organ size control and tumor suppression by restricting proliferation and promoting apoptosis. This chain is MOB kinase activator 3B (Mob3b), found in Mus musculus (Mouse).